The primary structure comprises 687 residues: MTAQSLLQMTLFLLSLLFLVQGAHGRGHREDFRFCSQRNQTHKSSLHYKATQDLRISIENSEEALTVHAPFPAAHPASQSFPDPRGLYHFCLYWNRHAGRLHLLYGKHDFLLSDKASSLLCFQHQEESLAQGPPLLATSVTSWWSPQNISLPSAASFTFSFHSPSHTAAHNASVDMCELKRDLQLLSQFLKHPQKASRRPSAAPASQQLQSLESKLTSVRFMGDTVSFEEDRINATVWKLQPTAGLQDLHIHSRQEEEQSEILEYSVLLPRTLFQRTKGRRGEAEKRLLLVDFSSQALFQDKNASQVLGEKVLGIVVQNTKVANLTEPVVLTFQHQLQPKNVTLQCVFWVEDPTLSSPGHWSSAGCETVRRETQTSCFCNHLTYFAVLMVSSVEVDAVHKHYLSLLSYVGCVISALACVVTIAAYLCSRRKPRDYTIKVHMNLLLAVFLLDMSFLLSEPVALTGSEAGCRAGAIFLHFSLLACLSWMGLEGYNLYRLVVEVFGTYVPGYLLKLSAMGWGFPIFLVTLVALVDVDNYGPIILAVHRTPESVIYPSMCWIRDSLVSYVTNLGLFSLVFLFNMAMLGTMVVQILRLRPHTQKWSHVLTLLGLSLVLGLPWALIFFSFASGTFQLVVLYLFSIITSFQGFLIFIWYWSMRLQARGGPSPLKSNSDSARLPISSGSTSSSRI.

A signal peptide spans 1–25; it reads MTAQSLLQMTLFLLSLLFLVQGAHG. 26 to 33 is a heparin binding site; sequence RGHREDFR. Residues 26-402 are Extracellular-facing; it reads RGHREDFRFC…VEVDAVHKHY (377 aa). Cystine bridges form between Cys-35-Cys-91 and Cys-121-Cys-177. Asn-39, Asn-148, and Asn-171 each carry an N-linked (GlcNAc...) asparagine glycan. Residue 190–200 participates in heparin binding; sequence LKHPQKASRRP. One can recognise a GAIN-B domain in the interval 224–395; sequence DTVSFEEDRI…AVLMVSSVEV (172 aa). N-linked (GlcNAc...) asparagine glycosylation is found at Asn-234, Asn-303, Asn-324, and Asn-341. Cystine bridges form between Cys-346/Cys-377 and Cys-366/Cys-379. A GPS region spans residues 346-395; the sequence is CVFWVEDPTLSSPGHWSSAGCETVRRETQTSCFCNHLTYFAVLMVSSVEV. The segment at 384–397 is stachel; that stretch reads YFAVLMVSSVEVDA. A helical transmembrane segment spans residues 403-423; sequence LSLLSYVGCVISALACVVTIA. Over 424–442 the chain is Cytoplasmic; sequence AYLCSRRKPRDYTIKVHMN. Residues 443–463 traverse the membrane as a helical segment; it reads LLLAVFLLDMSFLLSEPVALT. The Extracellular portion of the chain corresponds to 464-470; it reads GSEAGCR. Residues 471 to 491 traverse the membrane as a helical segment; sequence AGAIFLHFSLLACLSWMGLEG. The Cytoplasmic portion of the chain corresponds to 492–512; it reads YNLYRLVVEVFGTYVPGYLLK. The helical transmembrane segment at 513–533 threads the bilayer; that stretch reads LSAMGWGFPIFLVTLVALVDV. Topologically, residues 534–570 are extracellular; that stretch reads DNYGPIILAVHRTPESVIYPSMCWIRDSLVSYVTNLG. Residues 571–591 form a helical membrane-spanning segment; it reads LFSLVFLFNMAMLGTMVVQIL. Topologically, residues 592–603 are cytoplasmic; it reads RLRPHTQKWSHV. The chain crosses the membrane as a helical span at residues 604 to 624; the sequence is LTLLGLSLVLGLPWALIFFSF. At 625-630 the chain is on the extracellular side; it reads ASGTFQ. Residues 631 to 651 form a helical membrane-spanning segment; that stretch reads LVVLYLFSIITSFQGFLIFIW. Residues 652–687 lie on the Cytoplasmic side of the membrane; that stretch reads YWSMRLQARGGPSPLKSNSDSARLPISSGSTSSSRI. The disordered stretch occupies residues 664-687; the sequence is SPLKSNSDSARLPISSGSTSSSRI. Positions 678–687 are enriched in low complexity; the sequence is SSGSTSSSRI.

This sequence belongs to the G-protein coupled receptor 2 family. LN-TM7 subfamily. Heterodimer of 2 chains generated by proteolytic processing; the large extracellular N-terminal fragment (ADGRG1 NT) and the membrane-bound C-terminal fragment (ADGRG1-CT) predominantly remain associated and non-covalently linked. ADGRG1 NT self-associates in a trans-trans manner; the homophilic interaction enhances receptor signaling. Interacts with TGM2. Interacts with heparin; leading to the reduction of ADGRG1 shedding. Interacts with COL3A1. Part of a GPCR-tetraspanin complex at least consisting of ADGRG1, CD81, eventually CD9, and GNA11 in which CD81 is enhancing the association of ADGRG1 with GNA11. Post-translationally, autoproteolytically cleaved into 2 fragments; the large extracellular N-terminal fragment (ADGRG1 NT) and the membrane-bound C-terminal fragment (ADGRG1 CT) predominantly remain associated and non-covalently linked. Shedding to yield the secreted ADGRG1 N-terminal fragment seems to involve metalloprotease(s). Ubiquitinated. Undergoes polyubiquitination upon activation.

Its subcellular location is the cell membrane. The protein localises to the secreted. The protein resides in the membrane raft. With respect to regulation, forms a heterodimer of 2 chains generated by proteolytic processing that remain associated through non-covalent interactions mediated by the GAIN-B domain. In the inactivated receptor, the Stachel sequence (also named stalk) is embedded in the GAIN-B domain, where it adopts a beta-strand conformation. On activation, the Stachel moves into the 7 transmembrane region and adopts a twisted hook-shaped configuration that forms contacts within the receptor, leading to coupling of a G-alpha protein, which activates signaling. The cleaved GAIN-B and N-terminal domains can then dissociate from the rest of the receptor. Functionally, adhesion G-protein coupled receptor (aGPCR) for steroid hormone 17alpha-hydroxypregnenolone (17-OH), which is involved in cell adhesion and cell-cell interactions. Ligand binding causes a conformation change that triggers signaling via guanine nucleotide-binding proteins (G proteins) and modulates the activity of downstream effectors, such as RhoA pathway. ADGRG1 is coupled to G(12) and/or G(13) G proteins (GNA12 and GNA13, respectively) and mediates the activation Rho small GTPases. Acts as a potent suppressor of ferroptosis: binding to 17-OH-binding initiates signaling that down-regulates CD36 and alleviates ferroptosis-induced liver injury. Ligand-binding also induces cell adhesion activity via association with proteins such as collagen III/COL3A1 and TGM2. Mediates cell matrix adhesion in developing neurons and hematopoietic stem cells. Involved in cortical development, specifically in maintenance of the pial basement membrane integrity and in cortical lamination: association with COL3A1 in the developing brain inhibits neuronal migration via activation of the RhoA pathway. Together with TGM2, acts as a regulator of myelination and myelin repair in oligodendrocyte precursor cells. Acts as a hemostatic sensor of shear force: G protein-coupled receptor signaling is activated in response to shear force in platelets, promoting G(13) G protein signaling, and platelet shape change and aggregation in a COL3A1-dependent manner. Acts as an inhibitor of VEGFA production thereby inhibiting angiogenesis through a signaling pathway mediated by PRKCA. Plays a role in the maintenance of hematopoietic stem cells in bone marrow niche. Plays an essential role in testis development. This chain is Adhesion G-protein coupled receptor G1 (ADGRG1), found in Pongo pygmaeus (Bornean orangutan).